A 1195-amino-acid chain; its full sequence is Chromosome partition protein Smc (1195 aa).

33–40 is a binding site for ATP; it reads PNGSGKSN. Coiled coils occupy residues 185 to 241, 273 to 348, and 380 to 528; these read GVAQ…RQEQ, DAAT…IQAL, and QYQQ…QETQ. Residues 542–658 enclose the SMC hinge domain; that stretch reads PGVHGLVAQL…FERLDQARRY (117 aa). A coiled-coil region spans residues 698–1043; the sequence is GESAEVRAIR…ELLLRIENFT (346 aa).

Belongs to the SMC family. In terms of assembly, homodimer.

The protein localises to the cytoplasm. Functionally, required for chromosome condensation and partitioning. This is Chromosome partition protein Smc from Synechococcus sp. (strain ATCC 27144 / PCC 6301 / SAUG 1402/1) (Anacystis nidulans).